The chain runs to 691 residues: tRNA-dihydrouridine(47) synthase [NAD(P)(+)]-like (691 aa).

At Ser-2 the chain carries N-acetylserine. Residues 55-94 (PPPPSRSVKQNDAADVRAPQSGLVQEKKSKRQLKRERREQ) are disordered. 2 consecutive C3H1-type zinc fingers follow at residues 94 to 125 (QSTI…HDIE) and 138 to 163 (QCPF…HRDI). The segment at 259–286 (LETEEVRPMKKAKSEDQKNSKTGDVGGV) is disordered. A compositionally biased stretch (basic and acidic residues) spans 262–279 (EEVRPMKKAKSEDQKNSK). FMN is bound by residues 344–346 (PLT) and Gln-398. The active-site Proton donor is the Cys-429. FMN is bound by residues Lys-468, His-498, 531 to 533 (NGD), and 556 to 557 (AR).

It belongs to the Dus family. Dus3 subfamily. The cofactor is FMN.

It carries out the reaction 5,6-dihydrouridine(47) in tRNA + NAD(+) = uridine(47) in tRNA + NADH + H(+). It catalyses the reaction 5,6-dihydrouridine(47) in tRNA + NADP(+) = uridine(47) in tRNA + NADPH + H(+). The enzyme catalyses a 5,6-dihydrouridine in mRNA + NAD(+) = a uridine in mRNA + NADH + H(+). The catalysed reaction is a 5,6-dihydrouridine in mRNA + NADP(+) = a uridine in mRNA + NADPH + H(+). Its function is as follows. Catalyzes the synthesis of dihydrouridine, a modified base found in the D-loop of most tRNAs. Specifically modifies U47 in cytoplasmic tRNAs. Catalyzes the synthesis of dihydrouridine in some mRNAs, thereby affecting their translation. The polypeptide is tRNA-dihydrouridine(47) synthase [NAD(P)(+)]-like (Arabidopsis thaliana (Mouse-ear cress)).